A 310-amino-acid polypeptide reads, in one-letter code: tRNA uridine(34) hydroxylase (310 aa).

In terms of domain architecture, Rhodanese spans K127 to N225. C185 acts as the Cysteine persulfide intermediate in catalysis.

Belongs to the TrhO family.

It catalyses the reaction uridine(34) in tRNA + AH2 + O2 = 5-hydroxyuridine(34) in tRNA + A + H2O. In terms of biological role, catalyzes oxygen-dependent 5-hydroxyuridine (ho5U) modification at position 34 in tRNAs. The sequence is that of tRNA uridine(34) hydroxylase from Prochlorococcus marinus (strain MIT 9312).